The chain runs to 327 residues: GTPase Obg (327 aa).

One can recognise an Obg domain in the interval 2 to 160 (HTFKDSLNIT…LDLRLELVLI (159 aa)). Positions 161–326 (ADIGLVGLPN…LVNELFALSR (166 aa)) constitute an OBG-type G domain. GTP is bound by residues 167–174 (GLPNAGKS), 192–196 (FTTKV), 213–216 (DVPG), 280–283 (NKLD), and 307–309 (SIY). Positions 174 and 194 each coordinate Mg(2+).

Belongs to the TRAFAC class OBG-HflX-like GTPase superfamily. OBG GTPase family. In terms of assembly, monomer. Requires Mg(2+) as cofactor.

The protein localises to the cytoplasm. Its function is as follows. An essential GTPase which binds GTP, GDP and possibly (p)ppGpp with moderate affinity, with high nucleotide exchange rates and a fairly low GTP hydrolysis rate. Plays a role in control of the cell cycle, stress response, ribosome biogenesis and in those bacteria that undergo differentiation, in morphogenesis control. This is GTPase Obg from Borrelia turicatae (strain 91E135).